The chain runs to 327 residues: Phenylalanine--tRNA ligase alpha subunit (327 aa).

Position 252 (glutamate 252) interacts with Mg(2+).

Belongs to the class-II aminoacyl-tRNA synthetase family. Phe-tRNA synthetase alpha subunit type 1 subfamily. As to quaternary structure, tetramer of two alpha and two beta subunits. The cofactor is Mg(2+).

It localises to the cytoplasm. It carries out the reaction tRNA(Phe) + L-phenylalanine + ATP = L-phenylalanyl-tRNA(Phe) + AMP + diphosphate + H(+). This Pectobacterium carotovorum subsp. carotovorum (strain PC1) protein is Phenylalanine--tRNA ligase alpha subunit.